A 71-amino-acid chain; its full sequence is MAGMALARAWKQMSWFYYQYLLVTALYMLEPWERTVFNSMLVSIVGMALYTGYVFMPQHIMAILHYFEIVQ.

The Cytoplasmic portion of the chain corresponds to 1–12 (MAGMALARAWKQ). The helical transmembrane segment at 13–29 (MSWFYYQYLLVTALYML) threads the bilayer. Residues 30-34 (EPWER) are Lumenal-facing. Residues 35-57 (TVFNSMLVSIVGMALYTGYVFMP) form a helical membrane-spanning segment. The Cytoplasmic portion of the chain corresponds to 58–71 (QHIMAILHYFEIVQ).

This sequence belongs to the SPTSS family. SPTSSA subfamily. As to quaternary structure, component of the serine palmitoyltransferase (SPT) complex, which is composed of SPTLC1, SPTLC2 or SPTLC3 and SPTSSA or SPTSSB. The heterodimer consisting of SPTLC1 and SPTLC2/SPTLC3 forms the catalytic core of the enzyme, while SPTSSA or SPTSSB subunits determine substrate specificity. SPT also interacts with ORMDL proteins, especially ORMDL3, which negatively regulate SPT activity in the presence of ceramides. Interacts with MBOAT7; the interaction plays a role in MBOAT7 localization to mitochondria-associated membranes.

The protein resides in the endoplasmic reticulum membrane. Its pathway is lipid metabolism; sphingolipid metabolism. In terms of biological role, component of the serine palmitoyltransferase multisubunit enzyme (SPT) that catalyzes the initial and rate-limiting step in sphingolipid biosynthesis by condensing L-serine and activated acyl-CoA (most commonly palmitoyl-CoA) to form long-chain bases. The SPT complex is composed of SPTLC1, SPTLC2 or SPTLC3 and SPTSSA or SPTSSB. Within this complex, the heterodimer consisting of SPTLC1 and SPTLC2/SPTLC3 forms the catalytic core. Within the SPT complex, SPTSSA stimulates the catalytic activity and plays a role in substrate specificity, which depends upon the overall complex composition. The SPTLC1-SPTLC2-SPTSSA complex shows a strong preference for C16-CoA substrate, while the SPTLC1-SPTLC3-SPTSSA isozyme uses both C14-CoA and C16-CoA as substrates, with a slight preference for C14-CoA. Independently of its action as a SPT component, may be involved in MBOAT7 localization to mitochondria-associated membranes, a membrane bridge between the endoplasmic reticulum and mitochondria, may hence affect MBOAT7-catalyzed incorporation of arachidonic acid into phosphatidylinositol. The protein is Serine palmitoyltransferase small subunit A of Homo sapiens (Human).